A 189-amino-acid chain; its full sequence is Interferon alpha-F (189 aa).

The N-terminal stretch at 1–23 is a signal peptide; sequence MAPAWSLLLALLLLSCNAICSLG. Intrachain disulfides connect cysteine 24–cysteine 122 and cysteine 52–cysteine 162.

Belongs to the alpha/beta interferon family.

It is found in the secreted. Functionally, produced by macrophages, IFN-alpha have antiviral activities. Interferon stimulates the production of two enzymes: a protein kinase and an oligoadenylate synthetase. The polypeptide is Interferon alpha-F (IFNAF) (Bos taurus (Bovine)).